Here is a 235-residue protein sequence, read N- to C-terminus: Purine nucleoside phosphorylase DeoD-type (235 aa).

His4 serves as a coordination point for a purine D-ribonucleoside. Phosphate contacts are provided by residues Gly20, Arg24, Arg43, and 87–90; that span reads RVGT. Residues 178-180 and 202-203 each bind a purine D-ribonucleoside; these read EME and SD. Catalysis depends on Asp203, which acts as the Proton donor.

Belongs to the PNP/UDP phosphorylase family. As to quaternary structure, homohexamer; trimer of homodimers.

The enzyme catalyses a purine D-ribonucleoside + phosphate = a purine nucleobase + alpha-D-ribose 1-phosphate. It catalyses the reaction a purine 2'-deoxy-D-ribonucleoside + phosphate = a purine nucleobase + 2-deoxy-alpha-D-ribose 1-phosphate. Its function is as follows. Catalyzes the reversible phosphorolytic breakdown of the N-glycosidic bond in the beta-(deoxy)ribonucleoside molecules, with the formation of the corresponding free purine bases and pentose-1-phosphate. In Geobacillus sp. (strain WCH70), this protein is Purine nucleoside phosphorylase DeoD-type.